A 412-amino-acid chain; its full sequence is Cathepsin D (412 aa).

The signal sequence occupies residues 1–20 (MQPSSLLPLALCLLAAPASA). Residues 21 to 64 (LVRIPLHKFTSIRRTMSEVGGSVEDLIAKGPVSKYSQAVPAVTE) constitute a propeptide, activation peptide. O-linked (GalNAc...) threonine glycosylation is present at threonine 63. In terms of domain architecture, Peptidase A1 spans 79-407 (YYGEIGIGTP…DRDNNRVGFA (329 aa)). Cystine bridges form between cysteine 91–cysteine 160 and cysteine 110–cysteine 117. The active site involves aspartate 97. Asparagine 134 and asparagine 263 each carry an N-linked (GlcNAc...) asparagine glycan. Cysteine 286 and cysteine 290 form a disulfide bridge. The active site involves aspartate 295. Cysteine 329 and cysteine 366 are oxidised to a cystine.

Belongs to the peptidase A1 family. In terms of assembly, consists of a light chain and a heavy chain. Interacts with ADAM30; this leads to activation of CTSD. Interacts with GRN; stabilizes CTSD; increases its proteolytic activity. N- and O-glycosylated. In terms of processing, undergoes proteolytic cleavage and activation by ADAM30. Post-translationally, as well as the major heavy chain which starts at Leu-169, 2 minor forms starting at Gly-170 and Gly-171 have been identified. An additional form starting at Ala-168 has also been identified. As to expression, expressed in the aorta extracellular space (at protein level). Expressed in liver (at protein level).

The protein resides in the lysosome. It is found in the melanosome. The protein localises to the secreted. Its subcellular location is the extracellular space. It catalyses the reaction Specificity similar to, but narrower than, that of pepsin A. Does not cleave the 4-Gln-|-His-5 bond in B chain of insulin.. Its function is as follows. Acid protease active in intracellular protein breakdown. Plays a role in APP processing following cleavage and activation by ADAM30 which leads to APP degradation. Involved in the pathogenesis of several diseases such as breast cancer and possibly Alzheimer disease. This Homo sapiens (Human) protein is Cathepsin D (CTSD).